We begin with the raw amino-acid sequence, 486 residues long: Cardiolipin synthase A (486 aa).

The next 2 membrane-spanning stretches (helical) occupy residues 3 to 23 and 38 to 58; these read TFYTVMSWLLVFGYWLLIAGV and MAWLLIIYILPLVGIIAYLSL. 2 PLD phosphodiesterase domains span residues 219–246 and 399–426; these read MDLRQHRKVVLIDNYIAYTGSMNLVDPR and EGGLLHSKSILVDGQLSLVGTVNLDMRS. Residues H224, K226, D231, H404, K406, and D411 contribute to the active site.

The protein belongs to the phospholipase D family. Cardiolipin synthase subfamily. ClsA sub-subfamily.

The protein resides in the cell inner membrane. The enzyme catalyses 2 a 1,2-diacyl-sn-glycero-3-phospho-(1'-sn-glycerol) = a cardiolipin + glycerol. Its function is as follows. Catalyzes the reversible phosphatidyl group transfer from one phosphatidylglycerol molecule to another to form cardiolipin (CL) (diphosphatidylglycerol) and glycerol. This is Cardiolipin synthase A from Erwinia tasmaniensis (strain DSM 17950 / CFBP 7177 / CIP 109463 / NCPPB 4357 / Et1/99).